A 503-amino-acid polypeptide reads, in one-letter code: Lysine--tRNA ligase (503 aa).

Mg(2+) is bound by residues Glu412 and Glu419.

Belongs to the class-II aminoacyl-tRNA synthetase family. As to quaternary structure, homodimer. It depends on Mg(2+) as a cofactor.

The protein localises to the cytoplasm. The enzyme catalyses tRNA(Lys) + L-lysine + ATP = L-lysyl-tRNA(Lys) + AMP + diphosphate. The protein is Lysine--tRNA ligase of Idiomarina loihiensis (strain ATCC BAA-735 / DSM 15497 / L2-TR).